Reading from the N-terminus, the 470-residue chain is Serine hydroxymethyltransferase, cytosolic (470 aa).

Polar residues predominate over residues 1 to 11 (MSAYALSQSHR). The interval 1–23 (MSAYALSQSHRQLTEGHLKDTDP) is disordered. S2 carries the post-translational modification N-acetylserine. The segment covering 12-23 (QLTEGHLKDTDP) has biased composition (basic and acidic residues). Position 249 is an N6-(pyridoxal phosphate)lysine (K249).

The protein belongs to the SHMT family. In terms of assembly, homotetramer. The cofactor is pyridoxal 5'-phosphate.

The protein resides in the cytoplasm. The enzyme catalyses (6R)-5,10-methylene-5,6,7,8-tetrahydrofolate + glycine + H2O = (6S)-5,6,7,8-tetrahydrofolate + L-serine. The protein operates within one-carbon metabolism; tetrahydrofolate interconversion. Functionally, interconversion of serine and glycine. This chain is Serine hydroxymethyltransferase, cytosolic (SHM2), found in Candida albicans (strain SC5314 / ATCC MYA-2876) (Yeast).